Here is a 117-residue protein sequence, read N- to C-terminus: Venom nerve growth factor (117 aa).

Intrachain disulfides connect cysteine 12–cysteine 77, cysteine 55–cysteine 105, and cysteine 65–cysteine 107. The N-linked (GlcNAc...) asparagine glycan is linked to asparagine 21.

The protein belongs to the NGF-beta family. In terms of assembly, homodimer; non-covalently linked. Expressed by the venom gland.

It localises to the secreted. Functionally, nerve growth factor is important for the development and maintenance of the sympathetic and sensory nervous systems. It stimulates division and differentiation of sympathetic and embryonic sensory neurons as well as basal forebrain cholinergic neurons in the brain. Its relevance in the snake venom is not clear. However, it has been shown to inhibit metalloproteinase-dependent proteolysis of platelet glycoprotein Ib alpha, suggesting a metalloproteinase inhibition to prevent metalloprotease autodigestion and/or protection against prey proteases. Binds a lipid between the two protein chains in the homodimer. The lipid-bound form promotes histamine relase from mouse mast cells, contrary to the lipid-free form. This chain is Venom nerve growth factor, found in Daboia russelii (Russel's viper).